The following is a 483-amino-acid chain: General transcription factor IIH subunit 4 (483 aa).

The tract at residues 93–117 is disordered; it reads PQQQQSSQQSSSQQQQQQQQQQQQT. A compositionally biased stretch (low complexity) spans 94–116; that stretch reads QQQQSSQQSSSQQQQQQQQQQQQ.

This sequence belongs to the TFB2 family. Component of the 7-subunit TFIIH core complex composed of XPB/repB, XPD/repD, gtf2h1, gtf2h2, gtf2h3, gtf2h4 and gtf2h5, which is active in NER. The core complex associates with the 3-subunit CDK-activating kinase (CAK) module composed of cycH/cyclin H, cdk7 and mnat1 to form the 10-subunit holoenzyme (holo-TFIIH) active in transcription.

It is found in the nucleus. Functionally, component of the general transcription and DNA repair factor IIH (TFIIH) core complex, which is involved in general and transcription-coupled nucleotide excision repair (NER) of damaged DNA and, when complexed to CAK, in RNA transcription by RNA polymerase II. In NER, TFIIH acts by opening DNA around the lesion to allow the excision of the damaged oligonucleotide and its replacement by a new DNA fragment. In transcription, TFIIH has an essential role in transcription initiation. When the pre-initiation complex (PIC) has been established, TFIIH is required for promoter opening and promoter escape. Phosphorylation of the C-terminal tail (CTD) of the largest subunit of RNA polymerase II by the kinase module CAK controls the initiation of transcription. This is General transcription factor IIH subunit 4 (gtf2h4) from Dictyostelium discoideum (Social amoeba).